We begin with the raw amino-acid sequence, 276 residues long: Rhomboid protease GlpG (276 aa).

Transmembrane regions (helical) follow at residues 94-114 (GPVT…MQIL), 142-162 (ALMH…WYLG), 169-189 (LGSG…GYVQ), 192-212 (FSGP…GYVW), 229-249 (LIIF…GMSM), and 250-270 (ANGA…VDSL). Ser-201 functions as the Nucleophile in the catalytic mechanism. His-254 is an active-site residue.

This sequence belongs to the peptidase S54 family.

The protein localises to the cell inner membrane. The enzyme catalyses Cleaves type-1 transmembrane domains using a catalytic dyad composed of serine and histidine that are contributed by different transmembrane domains.. Its function is as follows. Rhomboid-type serine protease that catalyzes intramembrane proteolysis. This is Rhomboid protease GlpG from Escherichia coli O7:K1 (strain IAI39 / ExPEC).